The chain runs to 314 residues: GTP cyclohydrolase FolE2 (314 aa).

The disordered stretch occupies residues 290-314; it reads DASAWSAPQAAAPDQQESFATGNER. Residues 291–304 show a composition bias toward low complexity; sequence ASAWSAPQAAAPDQ. Residues 305–314 are compositionally biased toward polar residues; it reads QESFATGNER.

Belongs to the GTP cyclohydrolase IV family.

It catalyses the reaction GTP + H2O = 7,8-dihydroneopterin 3'-triphosphate + formate + H(+). It participates in cofactor biosynthesis; 7,8-dihydroneopterin triphosphate biosynthesis; 7,8-dihydroneopterin triphosphate from GTP: step 1/1. Functionally, converts GTP to 7,8-dihydroneopterin triphosphate. In Pseudomonas putida (strain ATCC 47054 / DSM 6125 / CFBP 8728 / NCIMB 11950 / KT2440), this protein is GTP cyclohydrolase FolE2.